The sequence spans 213 residues: Translation initiation factor IF-3 (213 aa).

A disordered region spans residues 193–213; sequence EKIASLPPLPPDNSGEPEDDE.

This sequence belongs to the IF-3 family. As to quaternary structure, monomer.

The protein localises to the cytoplasm. Functionally, IF-3 binds to the 30S ribosomal subunit and shifts the equilibrium between 70S ribosomes and their 50S and 30S subunits in favor of the free subunits, thus enhancing the availability of 30S subunits on which protein synthesis initiation begins. This is Translation initiation factor IF-3 from Chlorobaculum tepidum (strain ATCC 49652 / DSM 12025 / NBRC 103806 / TLS) (Chlorobium tepidum).